Here is a 116-residue protein sequence, read N- to C-terminus: Ribosome-binding factor A (116 aa).

The protein belongs to the RbfA family. Monomer. Binds 30S ribosomal subunits, but not 50S ribosomal subunits or 70S ribosomes.

It localises to the cytoplasm. Functionally, one of several proteins that assist in the late maturation steps of the functional core of the 30S ribosomal subunit. Associates with free 30S ribosomal subunits (but not with 30S subunits that are part of 70S ribosomes or polysomes). Required for efficient processing of 16S rRNA. May interact with the 5'-terminal helix region of 16S rRNA. In Streptococcus uberis (strain ATCC BAA-854 / 0140J), this protein is Ribosome-binding factor A.